The sequence spans 309 residues: Ankyrin repeat and SOCS box protein 12 (309 aa).

5 ANK repeats span residues 63-92 (VPGT…DVDS), 96-125 (KAQT…SPGG), 129-158 (NNCS…EANV), 171-200 (SCSG…DPDY), and 213-243 (RPRT…NIYL). One can recognise an SOCS box domain in the interval 268–308 (PRSLLSQVRLVVRRALCQAGQPQAINQLDIPPMLISYLKHQ).

The protein belongs to the ankyrin SOCS box (ASB) family. Interacts with CUL5 and RNF7.

The protein operates within protein modification; protein ubiquitination. Probable substrate-recognition component of a SCF-like ECS (Elongin-Cullin-SOCS-box protein) E3 ubiquitin-protein ligase complex which mediates the ubiquitination and subsequent proteasomal degradation of target proteins. The polypeptide is Ankyrin repeat and SOCS box protein 12 (ASB12) (Homo sapiens (Human)).